Here is a 416-residue protein sequence, read N- to C-terminus: Antigen EG13 (416 aa).

Residues 1–247 (MIQERADIEK…TVAKVDADAD (247 aa)) form the F-BAR domain. The segment at 297 to 327 (LKTFTSPDRGGPIPGTTDSGSNISTSPVHTT) is disordered. A compositionally biased stretch (polar residues) spans 312–327 (TTDSGSNISTSPVHTT). The SH3 domain maps to 361-416 (RPGVPIRALYDYVGVEADELSFNSGDLFEKLEDEDEQGWCKGRKDGRVGLYPRQLR).

This Echinococcus granulosus (Hydatid tapeworm) protein is Antigen EG13 (EG13).